The sequence spans 997 residues: Protein translocase subunit SecA (997 aa).

ATP-binding positions include glutamine 102, 120–124 (GEGKT), and aspartate 521. The interval 893-997 (PADASPNGVV…KYKKCHGAEA (105 aa)) is disordered. The segment covering 938-953 (AIEREFEKKKQQELSH) has biased composition (basic and acidic residues). Zn(2+) is bound by residues cysteine 981, cysteine 983, cysteine 992, and histidine 993. Residues 987 to 997 (KKYKKCHGAEA) are compositionally biased toward basic residues.

The protein belongs to the SecA family. In terms of assembly, monomer and homodimer. Part of the essential Sec protein translocation apparatus which comprises SecA, SecYEG and auxiliary proteins SecDF. Other proteins may also be involved. Requires Zn(2+) as cofactor.

It localises to the cell inner membrane. It is found in the cytoplasm. It carries out the reaction ATP + H2O + cellular proteinSide 1 = ADP + phosphate + cellular proteinSide 2.. Its function is as follows. Part of the Sec protein translocase complex. Interacts with the SecYEG preprotein conducting channel. Has a central role in coupling the hydrolysis of ATP to the transfer of proteins into and across the cell membrane, serving as an ATP-driven molecular motor driving the stepwise translocation of polypeptide chains across the membrane. The chain is Protein translocase subunit SecA from Acidobacterium capsulatum (strain ATCC 51196 / DSM 11244 / BCRC 80197 / JCM 7670 / NBRC 15755 / NCIMB 13165 / 161).